Here is a 355-residue protein sequence, read N- to C-terminus: MHC class I-like protein MILL2 (355 aa).

The N-terminal stretch at 1 to 29 (MKASSGKPREFRPAVLLLILGLLLRDSRG) is a signal peptide. The segment at 46 to 137 (RLTRTHTLRY…VINQKSQEEG (92 aa)) is alpha-1. Disulfide bonds link Cys96/Cys107, Cys147/Cys210, and Cys249/Cys306. Asn104 and Asn152 each carry an N-linked (GlcNAc...) asparagine glycan. The alpha-2 stretch occupies residues 138–229 (LHTLQATLGC…SLRNGLQDTG (92 aa)). Positions 230-323 (PPMVTVTCRN…SIMQTAVSGH (94 aa)) are alpha-3. Positions 231-321 (PMVTVTCRNY…NHSIMQTAVS (91 aa)) constitute an Ig-like C1-type domain. Asn312 is a glycosylation site (N-linked (GlcNAc...) asparagine). A connecting peptide region spans residues 324-329 (AAEDSQ). Residue Asp330 is the site of GPI-anchor amidated aspartate attachment. Residues 331–355 (VASSATASAGSALPVVLAVALARAN) constitute a propeptide, removed in mature form.

Belongs to the MHC class I family. Heterodimer with B2M (beta-2-microglobulin). Post-translationally, N-glycosylated. Ubiquitously expressed in neonatal and adult tissues.

It localises to the cell membrane. Binds to heparan sulfate proteoglycans on the surface of fibroblast (NIH-3T3) cells. The polypeptide is MHC class I-like protein MILL2 (Mus musculus (Mouse)).